The primary structure comprises 77 residues: Translation initiation factor IF-1, chloroplastic (77 aa).

Residues 1–71 (MKEQKWIHEG…TRGRIIYRLR (71 aa)) form the S1-like domain.

It belongs to the IF-1 family. In terms of assembly, component of the 30S ribosomal translation pre-initiation complex which assembles on the 30S ribosome in the order IF-2 and IF-3, IF-1 and N-formylmethionyl-tRNA(fMet); mRNA recruitment can occur at any time during PIC assembly.

The protein resides in the plastid. It is found in the chloroplast. Its function is as follows. One of the essential components for the initiation of protein synthesis. Stabilizes the binding of IF-2 and IF-3 on the 30S subunit to which N-formylmethionyl-tRNA(fMet) subsequently binds. Helps modulate mRNA selection, yielding the 30S pre-initiation complex (PIC). Upon addition of the 50S ribosomal subunit IF-1, IF-2 and IF-3 are released leaving the mature 70S translation initiation complex. The polypeptide is Translation initiation factor IF-1, chloroplastic (Garrya elliptica (Wavyleaf silktassel)).